The chain runs to 347 residues: E3 ubiquitin-protein ligase RNF146-B (347 aa).

The segment at 37–75 adopts an RING-type zinc-finger fold; the sequence is CAICLQTCVHPVSLPCKHVFCYLCVKGASWLGKRCALCR. Glycyl lysine isopeptide (Lys-Gly) (interchain with G-Cter in ubiquitin) cross-links involve residues Lys-85, Lys-95, Lys-131, and Lys-176. The region spanning 92 to 168 is the WWE domain; sequence EELKAASRGN…EHGRRRKIKR (77 aa). Disordered regions lie at residues 196 to 241 and 257 to 347; these read SSAD…GTSL and ERSH…VTEV. A compositionally biased stretch (low complexity) spans 203-217; it reads SVPAQSGASVQSSSV. Positions 282–296 are enriched in acidic residues; sequence SIEETESDASSDSED. Residues Ser-288 and Ser-292 each carry the phosphoserine modification. Residues 304 to 322 are compositionally biased toward polar residues; that stretch reads HSLTQQRLLVPNPSQTVSD.

Interacts with poly-ADP-ribosylated AXIN1, AXIN2, BLZF1 and CASC3. Post-translationally, ubiquitinated; autoubiquitinated. Autoubiquitination is enhanced upon poly(ADP-ribose)-binding.

Its subcellular location is the cytoplasm. The protein localises to the cytosol. The enzyme catalyses S-ubiquitinyl-[E2 ubiquitin-conjugating enzyme]-L-cysteine + [acceptor protein]-L-lysine = [E2 ubiquitin-conjugating enzyme]-L-cysteine + N(6)-ubiquitinyl-[acceptor protein]-L-lysine.. It participates in protein modification; protein ubiquitination. Functionally, E3 ubiquitin-protein ligase that specifically binds poly-ADP-ribosylated proteins and mediates their ubiquitination and subsequent degradation. Acts as an activator of the Wnt signaling pathway by mediating the ubiquitination of poly-ADP-ribosylated AXIN1 and AXIN2, 2 key components of the beta-catenin destruction complex. Acts in cooperation with tankyrase proteins (TNKS and TNKS2), which mediate poly-ADP-ribosylation of target proteins AXIN1, AXIN2, BLZF1, CASC3, TNKS and TNKS2. Recognizes and binds tankyrase-dependent poly-ADP-ribosylated proteins via its WWE domain and mediates their ubiquitination. In Bos taurus (Bovine), this protein is E3 ubiquitin-protein ligase RNF146-B (RNF146B).